The sequence spans 138 residues: Thyrotropin subunit beta (138 aa).

The first 20 residues, 1–20, serve as a signal peptide directing secretion; sequence MTAIYLMSMLFGLACGQAMS. Cystine bridges form between Cys22-Cys72, Cys36-Cys87, Cys39-Cys125, Cys47-Cys103, Cys51-Cys105, and Cys108-Cys115. Asn43 carries N-linked (GlcNAc...) asparagine glycosylation. Residues 133-138 constitute a propeptide that is removed on maturation; it reads VVGFSI.

It belongs to the glycoprotein hormones subunit beta family. As to quaternary structure, heterodimer of a common alpha chain and a unique beta chain which confers biological specificity to thyrotropin, lutropin, follitropin and gonadotropin.

The protein resides in the secreted. Its function is as follows. Indispensable for the control of thyroid structure and metabolism. This is Thyrotropin subunit beta (TSHB) from Canis lupus familiaris (Dog).